We begin with the raw amino-acid sequence, 310 residues long: L-lactate dehydrogenase (310 aa).

NAD(+) contacts are provided by residues Val11, Asp32, Tyr62, and 76 to 77; that span reads GV. Substrate-binding positions include Gln79, Arg85, and 117 to 120; that span reads NPVD. Residues 115 to 117 and Ser140 each bind NAD(+); that span reads ATN. 145–148 is a substrate binding site; the sequence is DTAR. Residues Arg150 and His165 each coordinate beta-D-fructose 1,6-bisphosphate. Catalysis depends on His172, which acts as the Proton acceptor. A Phosphotyrosine modification is found at Tyr218. Thr227 serves as a coordination point for substrate.

This sequence belongs to the LDH/MDH superfamily. LDH family. As to quaternary structure, homotetramer.

The protein resides in the cytoplasm. It catalyses the reaction (S)-lactate + NAD(+) = pyruvate + NADH + H(+). It participates in fermentation; pyruvate fermentation to lactate; (S)-lactate from pyruvate: step 1/1. With respect to regulation, allosterically activated by fructose 1,6-bisphosphate (FBP). Its function is as follows. Catalyzes the conversion of lactate to pyruvate. This chain is L-lactate dehydrogenase, found in Thermus thermophilus (strain ATCC BAA-163 / DSM 7039 / HB27).